The primary structure comprises 593 residues: ATP-dependent lipid A-core flippase (593 aa).

6 helical membrane passes run 33–53 (IGIV…EAGI), 75–95 (WYVP…QYTS), 137–157 (AIVF…VTLV), 164–184 (IFLL…VAVI), 262–282 (QPLT…IAVV), and 292–312 (GGFV…KHLI). An ABC transmembrane type-1 domain is found at 37-320 (VLAVVTMGVV…LIDVNQPLQR (284 aa)). An ABC transporter domain is found at 352-586 (IEFRAVSFDY…GGLYAHLHRI (235 aa)). Residue 386–393 (GPSGSGKT) participates in ATP binding.

Belongs to the ABC transporter superfamily. Lipid exporter (TC 3.A.1.106) family. Homodimer.

The protein resides in the cell inner membrane. It carries out the reaction ATP + H2O + lipid A-core oligosaccharideSide 1 = ADP + phosphate + lipid A-core oligosaccharideSide 2.. Its function is as follows. Involved in lipopolysaccharide (LPS) biosynthesis. Translocates lipid A-core from the inner to the outer leaflet of the inner membrane. Transmembrane domains (TMD) form a pore in the inner membrane and the ATP-binding domain (NBD) is responsible for energy generation. This is ATP-dependent lipid A-core flippase from Burkholderia orbicola (strain AU 1054).